The sequence spans 378 residues: MKITAVRTHLLEHRLDTPFESASMRFDRRAHVLVEIECDDGTVGWGECLGPARPNAAVVQAYSGWLIGQDPRQTEKIWAVLYNALRDQGQRGLSLTALSGIDIALWDIKGKHYGASISMLLGGRWRESVRAYATGSFKRDNVDRVSDNASEMAERRAEGFHACKIKIGFGVEEDLRVIAAVREAIGPDMRLMIDANHGYTVTEAITLGDRAAGFGIDWFEEPVVPEQLDAYARVRAGQPIPVAGGETWHGRYGMWQALSAGAVDILQPDLCGCGGFSEIQKIATLATLHGVRIVPHVWGTGVQIAAALQFMAAMTPDPVRVNPIEPIMEFDRTHNPFRQAVLREPLEAVNGVVTIPDGPGLGIEINRDALTEFRMPDP.

Residues D194, E220, and E246 each coordinate Mg(2+). Catalysis depends on H296, which acts as the Proton acceptor.

The protein belongs to the mandelate racemase/muconate lactonizing enzyme family. As to quaternary structure, homooctamer. Requires Mg(2+) as cofactor.

It catalyses the reaction D-glucaro-1,4-lactone = 5-dehydro-4-deoxy-D-glucarate + H(+). It carries out the reaction D-galactaro-1,4-lactone = 5-dehydro-4-deoxy-D-glucarate + H(+). Its pathway is carbohydrate acid metabolism; D-galacturonate degradation via prokaryotic oxidative pathway. Catalyzes the ring opening of D-galactaro-1,4-lactone to yield 5-keto-4-deoxy-D-glucarate (KDG) via a beta-elimination reaction. This is a step in the oxidative degradation pathway of D-galacturonate, which allows A.tumefaciens to utilize D-galacturonate as a sole carbon source. To a lesser extent, can also use D-glucaro-1,4-lactone as substrate to produce KDG, but cannot use D-galactaro-1,5-lactone, D-glucaro-6,3-lactone and linear D-glucarate. The sequence is that of D-galactarolactone cycloisomerase (gci) from Agrobacterium fabrum (strain C58 / ATCC 33970) (Agrobacterium tumefaciens (strain C58)).